The chain runs to 35 residues: Photosystem II reaction center protein M (35 aa).

The chain crosses the membrane as a helical span at residues Gly7 to Ile27.

This sequence belongs to the PsbM family. In terms of assembly, PSII is composed of 1 copy each of membrane proteins PsbA, PsbB, PsbC, PsbD, PsbE, PsbF, PsbH, PsbI, PsbJ, PsbK, PsbL, PsbM, PsbT, PsbX, PsbY, PsbZ, Psb30/Ycf12, peripheral proteins PsbO, CyanoQ (PsbQ), PsbU, PsbV and a large number of cofactors. It forms dimeric complexes.

The protein resides in the cellular thylakoid membrane. In terms of biological role, one of the components of the core complex of photosystem II (PSII). PSII is a light-driven water:plastoquinone oxidoreductase that uses light energy to abstract electrons from H(2)O, generating O(2) and a proton gradient subsequently used for ATP formation. It consists of a core antenna complex that captures photons, and an electron transfer chain that converts photonic excitation into a charge separation. This subunit is found at the monomer-monomer interface. This is Photosystem II reaction center protein M from Crocosphaera subtropica (strain ATCC 51142 / BH68) (Cyanothece sp. (strain ATCC 51142)).